We begin with the raw amino-acid sequence, 198 residues long: Recombination protein RecR (198 aa).

A C4-type zinc finger spans residues 57–72 (CLNCGCLTDEAACYFC). Positions 80–175 (QIICVTAFPR…QISRLAFGLP (96 aa)) constitute a Toprim domain.

This sequence belongs to the RecR family.

Functionally, may play a role in DNA repair. It seems to be involved in an RecBC-independent recombinational process of DNA repair. It may act with RecF and RecO. This Protochlamydia amoebophila (strain UWE25) protein is Recombination protein RecR.